The chain runs to 163 residues: Photosystem II extrinsic protein V (163 aa).

The N-terminal stretch at 1–26 is a signal peptide; sequence MFRRLIGVVVATVLLTFQLIVGSATA. The heme c site is built by Cys63, Cys66, His67, and His118.

The protein belongs to the cytochrome c family. PsbV subfamily. As to quaternary structure, PSII is composed of 1 copy each of membrane proteins PsbA, PsbB, PsbC, PsbD, PsbE, PsbF, PsbH, PsbI, PsbJ, PsbK, PsbL, PsbM, PsbT, PsbX, PsbY, PsbZ, Psb30/Ycf12, peripheral proteins PsbO, CyanoQ (PsbQ), PsbU, PsbV and a large number of cofactors. It forms dimeric complexes. It depends on heme c as a cofactor.

It is found in the cellular thylakoid membrane. In terms of biological role, one of the extrinsic, lumenal subunits of photosystem II (PSII). PSII is a light-driven water plastoquinone oxidoreductase, using light energy to abstract electrons from H(2)O, generating a proton gradient subsequently used for ATP formation. The extrinsic proteins stabilize the structure of photosystem II oxygen-evolving complex (OEC), the ion environment of oxygen evolution and protect the OEC against heat-induced inactivation. Low-potential cytochrome c that plays a role in the OEC of PSII. The sequence is that of Photosystem II extrinsic protein V from Trichormus variabilis (strain ATCC 29413 / PCC 7937) (Anabaena variabilis).